Reading from the N-terminus, the 935-residue chain is Progesterone receptor (935 aa).

Residues 1–49 (MTELKAKGLRAPHVAGSPSSPKVGSPLPCRQATGQFPGSQTSDTLPEVS) are disordered. The AF3; mediates transcriptional activation stretch occupies residues 1-164 (MTELKAKGLR…PATQRVLSPL (164 aa)). Positions 1–568 (MTELKAKGLR…YSFESLPQKI (568 aa)) are modulating, Pro-Rich. Residue S20 is modified to Phosphoserine. Polar residues predominate over residues 32 to 44 (ATGQFPGSQTSDT). The LXXL motif 1 motif lies at 55–59 (LDGLL). Residues 62 to 158 (RICQAQDPPD…EDPPAAPATQ (97 aa)) form a disordered region. S81 is modified (phosphoserine). The LXXL motif 2 motif lies at 115–119 (LDTLW). Phosphoserine is present on residues S130 and S162. A mediates transcriptional transrepression region spans residues 165-305 (MSRSGGKAGD…LATTVTDFIH (141 aa)). Residues 183 to 187 (KVLPR) carry the Nuclear localization signal motif. A disordered region spans residues 187-233 (RGLSPSRQLLLPTSGSPHWSGAPVKPSPQPAAVEVEEEDGSESEDSA). Position 190 is a phosphoserine (S190). A compositionally biased stretch (polar residues) spans 191–203 (PSRQLLLPTSGSP). S213 carries the phosphoserine modification. Residues 220-231 (EVEEEDGSESED) show a composition bias toward acidic residues. S294 is subject to Phosphoserine; by MAPK1. The tract at residues 328-365 (SYDGGSGAASAFAPPRSSPSASSTPVPGSDFPDCAYAP) is disordered. The span at 335-356 (AASAFAPPRSSPSASSTPVPGS) shows a compositional bias: low complexity. A Phosphoserine; by MAPK modification is found at S345. A Glycyl lysine isopeptide (Lys-Gly) (interchain with G-Cter in SUMO); alternate cross-link involves residue K388. Residue K388 forms a Glycyl lysine isopeptide (Lys-Gly) (interchain with G-Cter in ubiquitin); alternate linkage. The tract at residues 390–452 (EEEGAEASTR…PASASVSSAS (63 aa)) is disordered. A Phosphoserine; by CDK2 modification is found at S400. The span at 418–433 (PLGPPPPLPPRAPPSR) shows a compositional bias: pro residues. Positions 434–452 (PGEAAVTAAPASASVSSAS) are enriched in low complexity. The interval 456–548 (STLECILYKA…VYPPYLNYLR (93 aa)) is AF1; mediates transcriptional activation. K533 participates in a covalent cross-link: Glycyl lysine isopeptide (Lys-Gly) (interchain with G-Cter in SUMO). NR C4-type zinc fingers lie at residues 569 to 589 (CLIC…CGSC) and 605 to 629 (CAGR…LRKC). Residues 569 to 641 (CLICGDEASG…AGMVLGGRKF (73 aa)) constitute a DNA-binding region (nuclear receptor). S678 is subject to Phosphoserine. Positions 681 to 915 (QDIQLIPPLI…EFPEMMSEVI (235 aa)) constitute an NR LBD domain. The interval 689–935 (LINLLLSIEP…MVKPLLFHKK (247 aa)) is AF2; mediates transcriptional activation. Residue R768 participates in progesterone binding.

Belongs to the nuclear hormone receptor family. In terms of assembly, interacts with SMARD1 and UNC45A. Interacts with CUEDC2; the interaction promotes ubiquitination, decreases sumoylation, and represses transcriptional activity. Interacts with PIAS3; the interaction promotes sumoylation of PR in a hormone-dependent manner, inhibits DNA-binding, and alters nuclear export. Interacts with SP1; the interaction requires ligand-induced phosphorylation on Ser-345 by ERK1/2-MAPK. Interacts with PRMT2. Interacts with NCOA2 and NCOA1. Interacts with KLF9. Interacts with GTF2B. Post-translationally, phosphorylated on multiple serine sites. Several of these sites are hormone-dependent. Phosphorylation on Ser-294 is highly hormone-dependent and modulates ubiquitination and sumoylation on Lys-388. Phosphorylation on Ser-345 also requires induction by hormone. Basal phosphorylation on Ser-81, Ser-162, Ser-190 and Ser-400 is increased in response to progesterone and can be phosphorylated in vitro by the CDK2-A1 complex. Increased levels of phosphorylation on Ser-400 also in the presence of EGF, heregulin, IGF, PMA and FBS. Phosphorylation at this site by CDK2 is ligand-independent, and increases nuclear translocation and transcriptional activity. Phosphorylation at Ser-162 and Ser-294, but not at Ser-190, is impaired during the G(2)/M phase of the cell cycle. Phosphorylation on Ser-345 by ERK1/2 MAPK is required for interaction with SP1. Sumoylation is hormone-dependent and represses transcriptional activity. Sumoylation on all three sites is enhanced by PIAS3. Desumoylated by SENP1. Sumoylation on Lys-388, the main site of sumoylation, is repressed by ubiquitination on the same site, and modulated by phosphorylation at Ser-294. In terms of processing, ubiquitination is hormone-dependent and represses sumoylation on the same site. Promoted by MAPK-mediated phosphorylation on Ser-294. Ubiquitinated by UBR5, leading to its degradation: UBR5 specifically recognizes and binds ligand-bound PGR when it is not associated with coactivators (NCOAs). In presence of NCOAs, the UBR5-degron is not accessible, preventing its ubiquitination and degradation. Post-translationally, palmitoylated by ZDHHC7 and ZDHHC21. Palmitoylation is required for plasma membrane targeting and for rapid intracellular signaling via ERK and AKT kinases and cAMP generation.

It is found in the nucleus. Its subcellular location is the cytoplasm. In terms of biological role, the steroid hormones and their receptors are involved in the regulation of eukaryotic gene expression and affect cellular proliferation and differentiation in target tissues. Transcriptional activator of several progesteron-dependent promoters in a variety of cell types. Involved in activation of SRC-dependent MAPK signaling on hormone stimulation. In Sapajus apella (Brown-capped capuchin), this protein is Progesterone receptor (PGR).